The sequence spans 108 residues: V-type proton ATPase subunit G (108 aa).

Residues Tyr48–Glu60 show a composition bias toward basic and acidic residues. The tract at residues Tyr48–Ser89 is disordered. Polar residues predominate over residues Gln79–Ser89.

It belongs to the V-ATPase G subunit family. As to quaternary structure, V-ATPase is a heteromultimeric enzyme composed of a peripheral catalytic V1 complex (components A to H) attached to an integral membrane V0 proton pore complex (components: a, c, c', c'', d, e, f and VOA1).

Its subcellular location is the vacuole membrane. In terms of biological role, subunit of the V1 complex of vacuolar(H+)-ATPase (V-ATPase), a multisubunit enzyme composed of a peripheral complex (V1) that hydrolyzes ATP and a membrane integral complex (V0) that translocates protons. V-ATPase is responsible for acidifying and maintaining the pH of intracellular compartments. The polypeptide is V-type proton ATPase subunit G (vma10) (Schizosaccharomyces pombe (strain 972 / ATCC 24843) (Fission yeast)).